An 89-amino-acid chain; its full sequence is U-scoloptoxin(12)-Er1a (89 aa).

The first 22 residues, 1–22 (MKGLFLVVFLMWFVSQMNTEET), serve as a signal peptide directing secretion.

Belongs to the scoloptoxin-12 family. Post-translationally, contains 3 disulfide bonds. Expressed by the venom gland.

It localises to the secreted. In Ethmostigmus rubripes (Giant centipede), this protein is U-scoloptoxin(12)-Er1a.